Reading from the N-terminus, the 182-residue chain is Protein SYM1 (182 aa).

Helical transmembrane passes span 51-70 (TLRPFLYGAVLFSLVGDKWY), 98-118 (LIFAPIGVPLYYTAMALMEGG), and 135-155 (LLANWIVWPAFQLCNFSLVPV).

The protein belongs to the peroxisomal membrane protein PXMP2/4 family.

It localises to the mitochondrion inner membrane. In terms of biological role, may be involved in cellular response to stress. Required to maintain mitochondrial DNA (mtDNA) integrity and stability. In Eremothecium gossypii (strain ATCC 10895 / CBS 109.51 / FGSC 9923 / NRRL Y-1056) (Yeast), this protein is Protein SYM1 (SYM1).